The following is a 471-amino-acid chain: Putative multidrug resistance protein MdtD (471 aa).

13 helical membrane passes run Leu12 to Ala32, Met49 to Ala69, Ile77 to Thr97, Val106 to Ile126, Phe138 to Val158, Trp165 to Met185, Phe197 to Tyr217, Ala225 to Ala245, Phe263 to Pro285, Ile290 to Gly312, Leu342 to Phe362, Met396 to Phe416, and Ile431 to Ala451.

It belongs to the major facilitator superfamily. TCR/Tet family.

Its subcellular location is the cell inner membrane. The sequence is that of Putative multidrug resistance protein MdtD from Cronobacter sakazakii (strain ATCC BAA-894) (Enterobacter sakazakii).